The primary structure comprises 124 residues: Fluoride-specific ion channel FluC 1 (124 aa).

4 helical membrane-spanning segments follow: residues 7 to 27, 32 to 52, 58 to 78, and 93 to 113; these read IQSK…LGAI, LNNY…IVGL, IQFF…GWIL, and AGLI…TFWI. Residues Gly-68 and Thr-71 each contribute to the Na(+) site.

The protein belongs to the fluoride channel Fluc/FEX (TC 1.A.43) family.

Its subcellular location is the cell inner membrane. The catalysed reaction is fluoride(in) = fluoride(out). With respect to regulation, na(+) is not transported, but it plays an essential structural role and its presence is essential for fluoride channel function. Functionally, fluoride-specific ion channel. Important for reducing fluoride concentration in the cell, thus reducing its toxicity. This Prochlorococcus marinus (strain SARG / CCMP1375 / SS120) protein is Fluoride-specific ion channel FluC 1.